The following is a 208-amino-acid chain: MSRRATVKAPRAGAAARRGAVARRTKETDVAVELRLEPGEAAISTGLPFFDHMLDQISRHGGMALTVRAKGDLQVDAHHTVEDVGIGLGEALRQALEDKAGLARYGHAVVPLDEALVEAVVDLSGRPHLTFNAKLPSGKKFIGGYDVDLTQDFLQALVNHARICVHVNVRYGRNLHHVVEAIFKATARALRAATAREGTALPSTKGTL.

The interval 1–20 (MSRRATVKAPRAGAAARRGA) is disordered. Residues 7–19 (VKAPRAGAAARRG) show a composition bias toward low complexity.

The protein belongs to the imidazoleglycerol-phosphate dehydratase family.

The protein resides in the cytoplasm. The enzyme catalyses D-erythro-1-(imidazol-4-yl)glycerol 3-phosphate = 3-(imidazol-4-yl)-2-oxopropyl phosphate + H2O. The protein operates within amino-acid biosynthesis; L-histidine biosynthesis; L-histidine from 5-phospho-alpha-D-ribose 1-diphosphate: step 6/9. In Anaeromyxobacter sp. (strain K), this protein is Imidazoleglycerol-phosphate dehydratase.